Consider the following 315-residue polypeptide: L-lactate dehydrogenase (315 aa).

NAD(+)-binding positions include V14, D35, Y67, and 81-82 (GV). Residues Q84, R91, and 123 to 126 (NPVD) contribute to the substrate site. Residues 121-123 (ASN) and S146 contribute to the NAD(+) site. 151–154 (DSAR) is a binding site for substrate. H178 serves as the catalytic Proton acceptor. The residue at position 219 (Y219) is a Phosphotyrosine. Substrate is bound at residue T228.

The protein belongs to the LDH/MDH superfamily. LDH family. In terms of assembly, homotetramer.

The protein resides in the cytoplasm. The catalysed reaction is (S)-lactate + NAD(+) = pyruvate + NADH + H(+). It participates in fermentation; pyruvate fermentation to lactate; (S)-lactate from pyruvate: step 1/1. In terms of biological role, catalyzes the conversion of lactate to pyruvate. This chain is L-lactate dehydrogenase, found in Malacoplasma penetrans (strain HF-2) (Mycoplasma penetrans).